The chain runs to 66 residues: ATP synthase protein 8 (66 aa).

A helical membrane pass occupies residues 8 to 24 (PWPMVIMSMILTLFYIT). Lys54 is modified (N6-acetyllysine; alternate). The residue at position 54 (Lys54) is an N6-succinyllysine; alternate. At Lys57 the chain carries N6-acetyllysine.

The protein belongs to the ATPase protein 8 family. F-type ATPases have 2 components, CF(1) - the catalytic core - and CF(0) - the membrane proton channel. Component of an ATP synthase complex composed of ATP5PB, ATP5MC1, ATP5F1E, ATP5PD, ATP5ME, ATP5PF, ATP5MF, MT-ATP6, MT-ATP8, ATP5F1A, ATP5F1B, ATP5F1D, ATP5F1C, ATP5PO, ATP5MG, ATP5MK and ATP5MJ. Interacts with PRICKLE3.

The protein resides in the mitochondrion membrane. Its function is as follows. Mitochondrial membrane ATP synthase (F(1)F(0) ATP synthase or Complex V) produces ATP from ADP in the presence of a proton gradient across the membrane which is generated by electron transport complexes of the respiratory chain. F-type ATPases consist of two structural domains, F(1) - containing the extramembraneous catalytic core and F(0) - containing the membrane proton channel, linked together by a central stalk and a peripheral stalk. During catalysis, ATP synthesis in the catalytic domain of F(1) is coupled via a rotary mechanism of the central stalk subunits to proton translocation. Part of the complex F(0) domain. Minor subunit located with subunit a in the membrane. This is ATP synthase protein 8 (MT-ATP8) from Alouatta sara (Bolivian red howler monkey).